Consider the following 373-residue polypeptide: MNLGLNVKEIERYDLVILLMAVALTCFGVVMVYSASSVMATKKFHDGFYFLKRQGVYALLGFGVMAVAMRIDYRTWREYAVPILLGCLFLLFLVFIPGIGGAAKGASRWIRLPGFNFQPSELTKIALIVYMAYSLDKKQDKVKFFSTGFLPYMVLLSVVLLILLKQHDLGAALTMGLVAIIMLFAAGTRPRYIIAMGMMALPILYFLVMNVDYRRRRILAYLNPWEDPTDTGFQIIQSWLAFGNGGVLGQGLGEGKQKMFYLPEAHTDFILSVTGEELGLIGVTVIAAMFLMLVLRGVRVALMAQEPFGRFLAFGIATLLGIQSFVNMAVVTGLLPTKGLALPFISYGGSSLIVTLFAVGILLNISTRLKGAP.

Transmembrane regions (helical) follow at residues 15–35 (LVIL…VYSA), 48–68 (FYFL…MAVA), 80–100 (AVPI…PGIG), 144–164 (FFST…LILL), 168–188 (DLGA…AAGT), 192–212 (YIIA…MNVD), 278–298 (LGLI…LRGV), 311–331 (FLAF…MAVV), and 342–362 (LPFI…VGIL).

The protein belongs to the SEDS family. FtsW subfamily.

It localises to the cell inner membrane. The enzyme catalyses [GlcNAc-(1-&gt;4)-Mur2Ac(oyl-L-Ala-gamma-D-Glu-L-Lys-D-Ala-D-Ala)](n)-di-trans,octa-cis-undecaprenyl diphosphate + beta-D-GlcNAc-(1-&gt;4)-Mur2Ac(oyl-L-Ala-gamma-D-Glu-L-Lys-D-Ala-D-Ala)-di-trans,octa-cis-undecaprenyl diphosphate = [GlcNAc-(1-&gt;4)-Mur2Ac(oyl-L-Ala-gamma-D-Glu-L-Lys-D-Ala-D-Ala)](n+1)-di-trans,octa-cis-undecaprenyl diphosphate + di-trans,octa-cis-undecaprenyl diphosphate + H(+). It functions in the pathway cell wall biogenesis; peptidoglycan biosynthesis. Functionally, peptidoglycan polymerase that is essential for cell division. This Geobacter sulfurreducens (strain DL-1 / KN400) protein is Probable peptidoglycan glycosyltransferase FtsW.